The sequence spans 225 residues: MRILFFGPNGSGKGTQGSIVKGKYNIPHIESGAIFRENISKGTEIGKKAKEYIDRGDLVPDEITIPMILGRLQADDCGNGWLLDGFPRSKEQAIKLDEALKEAGMALDVVIEMILDRQIAKNRIMGRRLCENDNNHPNNIFIDAIKPDGDKCRVCGGALSARSDDQDEDAIDKRHNIYYDTDTGTLASAYYFKAIAEKDGSVKYITLNGEPSVPEVTDELVGKLG.

Residue 10–15 (GSGKGT) participates in ATP binding. Residues 30–59 (ESGAIFRENISKGTEIGKKAKEYIDRGDLV) form an NMP region. AMP-binding positions include Ser-31, Arg-36, 57-59 (DLV), 85-88 (GFPR), and Gln-92. Positions 126–165 (GRRLCENDNNHPNNIFIDAIKPDGDKCRVCGGALSARSDD) are LID. An ATP-binding site is contributed by Arg-127. Residues Arg-162 and Arg-174 each contribute to the AMP site. Pro-211 is a binding site for ATP.

Belongs to the adenylate kinase family. As to quaternary structure, monomer.

The protein resides in the cytoplasm. It carries out the reaction AMP + ATP = 2 ADP. It functions in the pathway purine metabolism; AMP biosynthesis via salvage pathway; AMP from ADP: step 1/1. In terms of biological role, catalyzes the reversible transfer of the terminal phosphate group between ATP and AMP. Plays an important role in cellular energy homeostasis and in adenine nucleotide metabolism. In Desulfatibacillum aliphaticivorans, this protein is Adenylate kinase.